The chain runs to 153 residues: Transcriptional repressor NrdR (153 aa).

Residues 3 to 34 fold into a zinc finger; that stretch reads CPFCNHLHDKVVDSRESKEGDAIRRRRECLEC. The ATP-cone domain occupies 49 to 139; sequence YMVVKKDGRR…VYRDFQDEQA (91 aa).

This sequence belongs to the NrdR family. Zn(2+) serves as cofactor.

Negatively regulates transcription of bacterial ribonucleotide reductase nrd genes and operons by binding to NrdR-boxes. The polypeptide is Transcriptional repressor NrdR (Solibacter usitatus (strain Ellin6076)).